Reading from the N-terminus, the 343-residue chain is Anthranilate phosphoribosyltransferase (343 aa).

Residues Gly-84, 87-88, Thr-92, 94-97, 112-120, and Ser-124 contribute to the 5-phospho-alpha-D-ribose 1-diphosphate site; these read GD, NIST, and KHGNRGVSS. Gly-84 contacts anthranilate. Ser-96 contacts Mg(2+). Residue Asn-115 participates in anthranilate binding. Arg-170 is an anthranilate binding site. Mg(2+) contacts are provided by Asp-229 and Glu-230.

The protein belongs to the anthranilate phosphoribosyltransferase family. In terms of assembly, homodimer. The cofactor is Mg(2+).

The catalysed reaction is N-(5-phospho-beta-D-ribosyl)anthranilate + diphosphate = 5-phospho-alpha-D-ribose 1-diphosphate + anthranilate. It functions in the pathway amino-acid biosynthesis; L-tryptophan biosynthesis; L-tryptophan from chorismate: step 2/5. Functionally, catalyzes the transfer of the phosphoribosyl group of 5-phosphorylribose-1-pyrophosphate (PRPP) to anthranilate to yield N-(5'-phosphoribosyl)-anthranilate (PRA). This chain is Anthranilate phosphoribosyltransferase, found in Burkholderia multivorans (strain ATCC 17616 / 249).